The chain runs to 252 residues: tRNA (guanine-N(7)-)-methyltransferase (252 aa).

Positions 51, 76, 103, and 125 each coordinate S-adenosyl-L-methionine. The active site involves D125. Substrate is bound by residues K129, D159, and 199 to 202 (TYYE).

This sequence belongs to the class I-like SAM-binding methyltransferase superfamily. TrmB family.

The enzyme catalyses guanosine(46) in tRNA + S-adenosyl-L-methionine = N(7)-methylguanosine(46) in tRNA + S-adenosyl-L-homocysteine. The protein operates within tRNA modification; N(7)-methylguanine-tRNA biosynthesis. Functionally, catalyzes the formation of N(7)-methylguanine at position 46 (m7G46) in tRNA. This is tRNA (guanine-N(7)-)-methyltransferase from Bacteroides fragilis (strain YCH46).